The sequence spans 205 residues: Cytochrome bo(3) ubiquinol oxidase subunit 3 (205 aa).

Residues methionine 1–lysine 26 are Cytoplasmic-facing. A helical membrane pass occupies residues leucine 27–valine 47. The Extracellular portion of the chain corresponds to tyrosine 48–serine 69. A helical transmembrane segment spans residues isoleucine 70–alanine 90. The Cytoplasmic portion of the chain corresponds to methionine 91 to lysine 97. The helical transmembrane segment at methionine 98–valine 118 threads the bilayer. Topologically, residues histidine 119–serine 138 are extracellular. A helical transmembrane segment spans residues isoleucine 139 to leucine 159. The Cytoplasmic segment spans residues serine 160 to arginine 177. A helical transmembrane segment spans residues isoleucine 178–phenylalanine 198. Over valine 199–isoleucine 205 the chain is Extracellular.

Belongs to the cytochrome c oxidase subunit 3 family. Heterooctamer of two A chains, two B chains, two C chains and two D chains.

The protein resides in the cell membrane. Cytochrome bo(3) ubiquinol terminal oxidase is the component of the aerobic respiratory chain of E.coli that predominates when cells are grown at high aeration. Has proton pump activity across the membrane in addition to electron transfer, pumping 2 protons/electron. The sequence is that of Cytochrome bo(3) ubiquinol oxidase subunit 3 (cyoC) from Buchnera aphidicola subsp. Acyrthosiphon pisum (strain APS) (Acyrthosiphon pisum symbiotic bacterium).